The following is a 350-amino-acid chain: Biotin synthase (350 aa).

Positions 38–257 constitute a Radical SAM core domain; that stretch reads NKVQVSTLLS…AVARIIMPMS (220 aa). 3 residues coordinate [4Fe-4S] cluster: cysteine 53, cysteine 57, and cysteine 60. [2Fe-2S] cluster contacts are provided by cysteine 97, cysteine 128, cysteine 188, and arginine 260.

It belongs to the radical SAM superfamily. Biotin synthase family. Homodimer. It depends on [4Fe-4S] cluster as a cofactor. [2Fe-2S] cluster serves as cofactor.

It catalyses the reaction (4R,5S)-dethiobiotin + (sulfur carrier)-SH + 2 reduced [2Fe-2S]-[ferredoxin] + 2 S-adenosyl-L-methionine = (sulfur carrier)-H + biotin + 2 5'-deoxyadenosine + 2 L-methionine + 2 oxidized [2Fe-2S]-[ferredoxin]. It participates in cofactor biosynthesis; biotin biosynthesis; biotin from 7,8-diaminononanoate: step 2/2. In terms of biological role, catalyzes the conversion of dethiobiotin (DTB) to biotin by the insertion of a sulfur atom into dethiobiotin via a radical-based mechanism. The polypeptide is Biotin synthase (Photobacterium profundum (strain SS9)).